Here is a 229-residue protein sequence, read N- to C-terminus: Flagellar L-ring protein (229 aa).

Positions Met-1 to Gly-23 are cleaved as a signal peptide. Cys-24 carries the N-palmitoyl cysteine lipid modification. Cys-24 carries S-diacylglycerol cysteine lipidation.

This sequence belongs to the FlgH family. The basal body constitutes a major portion of the flagellar organelle and consists of four rings (L,P,S, and M) mounted on a central rod.

The protein localises to the cell outer membrane. Its subcellular location is the bacterial flagellum basal body. In terms of biological role, assembles around the rod to form the L-ring and probably protects the motor/basal body from shearing forces during rotation. This Cupriavidus pinatubonensis (strain JMP 134 / LMG 1197) (Cupriavidus necator (strain JMP 134)) protein is Flagellar L-ring protein.